Consider the following 438-residue polypeptide: UDP-N-acetylmuramoylalanine--D-glutamate ligase (438 aa).

112-118 (GSNGKST) lines the ATP pocket.

Belongs to the MurCDEF family.

The protein localises to the cytoplasm. The catalysed reaction is UDP-N-acetyl-alpha-D-muramoyl-L-alanine + D-glutamate + ATP = UDP-N-acetyl-alpha-D-muramoyl-L-alanyl-D-glutamate + ADP + phosphate + H(+). It participates in cell wall biogenesis; peptidoglycan biosynthesis. Its function is as follows. Cell wall formation. Catalyzes the addition of glutamate to the nucleotide precursor UDP-N-acetylmuramoyl-L-alanine (UMA). This chain is UDP-N-acetylmuramoylalanine--D-glutamate ligase, found in Shigella dysenteriae serotype 1 (strain Sd197).